Consider the following 750-residue polypeptide: Phosphate transporter PHO1 homolog 7 (750 aa).

Residues 1–298 (MKFGKDFVRQ…SRSAAKPYME (298 aa)) enclose the SPX domain. Residues 1–350 (MKFGKDFVRQ…KVKKEKHRIT (350 aa)) lie on the Cytoplasmic side of the membrane. Residues 351–371 (FSTGFFVGCTVSLVVALVMFI) form a helical membrane-spanning segment. The Extracellular segment spans residues 372–391 (HARNIMGAVGHKVYMETMFP). The helical transmembrane segment at 392–412 (LYSLFAFVVLHMIMYASNIYF) threads the bilayer. The Cytoplasmic segment spans residues 413 to 435 (WKRYRVNYPFIFGFKEGTELGYR). A helical transmembrane segment spans residues 436–456 (HVLLLSFGLGTLALCAVLINL). Over 457 to 472 (DMEMDPNTNDYKTMTE) the chain is Extracellular. The helical transmembrane segment at 473–493 (LLPMFILALVVAILFCPFNIF) threads the bilayer. Residues 494–622 (YRSSRVFFLM…YSFNRGNIWK (129 aa)) are Cytoplasmic-facing. The EXS domain maps to 557–750 (RSSDVYSTFY…NYNEEEDRDS (194 aa)). The helical transmembrane segment at 623-643 (ISAWVFSALATFYGTYWDIVF) threads the bilayer. The Extracellular segment spans residues 644 to 666 (DWGLLHRPSKHLLREKLLVPHKA). Residues 667–687 (VYYVAIVLNIVLRMAWLQTVL) traverse the membrane as a helical segment. At 688–750 (DFNLSFLHRE…NYNEEEDRDS (63 aa)) the chain is on the cytoplasmic side.

Belongs to the SYG1 (TC 2.A.94) family. As to expression, expressed in root tips, vascular cylinders of roots and filaments, leaf hydathodes, stem, receptacle and stigma apex.

It is found in the cell membrane. May transport inorganic phosphate (Pi). The chain is Phosphate transporter PHO1 homolog 7 (PHO1-H7) from Arabidopsis thaliana (Mouse-ear cress).